We begin with the raw amino-acid sequence, 309 residues long: Aspartate carbamoyltransferase catalytic subunit (309 aa).

Residues R56 and T57 each contribute to the carbamoyl phosphate site. An L-aspartate-binding site is contributed by K84. The carbamoyl phosphate site is built by R106, H136, and Q139. The L-aspartate site is built by R169 and R221. A264 and P265 together coordinate carbamoyl phosphate.

It belongs to the aspartate/ornithine carbamoyltransferase superfamily. ATCase family. As to quaternary structure, heterododecamer (2C3:3R2) of six catalytic PyrB chains organized as two trimers (C3), and six regulatory PyrI chains organized as three dimers (R2).

The catalysed reaction is carbamoyl phosphate + L-aspartate = N-carbamoyl-L-aspartate + phosphate + H(+). Its pathway is pyrimidine metabolism; UMP biosynthesis via de novo pathway; (S)-dihydroorotate from bicarbonate: step 2/3. Catalyzes the condensation of carbamoyl phosphate and aspartate to form carbamoyl aspartate and inorganic phosphate, the committed step in the de novo pyrimidine nucleotide biosynthesis pathway. This Limosilactobacillus reuteri subsp. reuteri (strain JCM 1112) (Lactobacillus reuteri) protein is Aspartate carbamoyltransferase catalytic subunit.